We begin with the raw amino-acid sequence, 914 residues long: Eukaryotic initiation factor 4F subunit p130 (914 aa).

Residues 1–12 are compositionally biased toward pro residues; the sequence is MTDQRGPPPPHP. Disordered regions lie at residues 1-84, 128-205, 240-351, and 457-535; these read MTDQ…YNNR, PPYT…NEAV, ERKK…VNKS, and IARN…LVPS. Residues 26 to 44 show a composition bias toward polar residues; that stretch reads NQYSGANNSQPNNHYNENL. Positions 59-73 are enriched in low complexity; that stretch reads KNGKYGTNKYNNRNN. Serine 74 is modified (phosphoserine). A compositionally biased stretch (low complexity) spans 145–155; that stretch reads PKTTKIEITTK. The segment covering 156-195 has biased composition (basic and acidic residues); it reads TGERLNLKKFHEEKKASKGEEKNDGVEQKSKSGTPFEKEA. Threonine 196 carries the post-translational modification Phosphothreonine. The interval 201 to 315 is interaction with PAB1; it reads ANEAVKDTLT…TGSVTKSVTF (115 aa). A compositionally biased stretch (basic and acidic residues) spans 240 to 263; it reads ERKKNGLISETEKKQETSNHDNTD. 2 stretches are compositionally biased toward polar residues: residues 298–325 and 339–348; these read SVKT…SSSQ and ISDTTGGKTV. Threonine 301 carries the post-translational modification Phosphothreonine. Residues 496–529 are compositionally biased toward basic and acidic residues; sequence RMGDDRRSNRGYTSRKDREKAAEKAEEQAPKEEI. Serine 503 carries the post-translational modification Phosphoserine. The region spanning 567-810 is the MIF4G domain; sequence ERKMKSLLNK…IDVKELREIK (244 aa). Residues 833–914 are disordered; sequence QLRQKKNSQR…ALMNNDGDSD (82 aa). A compositionally biased stretch (low complexity) spans 841–867; the sequence is QRSNSRFNNHNQSNSNRYSSNRRNMQN. The span at 868–886 shows a compositional bias: polar residues; it reads TQRDSFASTKTGSFRNNQR. Position 913 is a phosphoserine (serine 913).

It belongs to the eukaryotic initiation factor 4G family. In terms of assembly, component of the eIF4F complex, which composition varies with external and internal environmental conditions. It is composed of at least eIF4A (TIF1/TIF2), eIF4E (TIF45) and eIF4G (TIF4631 or TIF4632). Interacts with PAT1 in a RNA-dependent manner.

The protein resides in the cytoplasm. Its function is as follows. Component of the eIF4F complex, which interacts with the mRNA cap structure and serves as an initial point of assembly for the translation apparatus. Stimulates translation by interaction with polyadenylate-binding protein PAB1, bringing the 5'- and 3'-ends of the mRNA in proximity. The formation of this circular mRNP structure appears to be critical for the synergistic effects of the cap and the poly(A) tail in facilitating translation initiation, recycling of ribosomes, and mRNA stability. TIF4632 is probably essential when TIF4631 is missing. The polypeptide is Eukaryotic initiation factor 4F subunit p130 (Saccharomyces cerevisiae (strain ATCC 204508 / S288c) (Baker's yeast)).